The chain runs to 36 residues: TICTGADRPCAACCPCCPGTSCQGPEPNGVSYCRND.

4 disulfides stabilise this stretch: Cys-3–Cys-17, Cys-10–Cys-22, Cys-13–Cys-14, and Cys-16–Cys-33.

The protein belongs to the neurotoxin 11 (kappa toxin) family. As to expression, expressed by the venom gland.

The protein localises to the secreted. Its function is as follows. This excitatory toxin inhibits insect calcium-activated potassium (KCa) channels (Slo-type). The chain is Lambda-hexatoxin-Hv1b from Hadronyche versuta (Blue mountains funnel-web spider).